The chain runs to 546 residues: MAAKDVKFGDSARKKMLVGVNVLADAVKATLGPKGRNVVLAKSFGAPTITKDGVSVAKEIELKDAFENMGAQLVKEVASKANDAAGDGTTTATVLAQAIVNEGLKAVAAGMNPMDLKRGIDKATAAVVAELKNLSKPCADSKAIAQVGTISANSDNSIGEIIAEAMEKVGKEGVITVEEGSGLENELSVVEGMQFDRGYLSPYFVNKPDTMVAELEGPLLLLVDKKISNIRELLPVLEAVAKAGRPLLIVAEDVEGEALATLVVNNMRGIVKVAAVKAPGFGDRRKAMLQDIAVLTGGQVISEEIGLSLETATLEHLGNAKRVILSKENTTIIDGAGADTEIEARVKQIRAQIEETSSDYDREKLQERLAKLAGGVAVIKVGAGTEVEMKEKKARVEDALHATRAAVEEGVVPGGGVALVRALAAIVDLKGDNEDQNVGIALLRRAVESPLRQITANAGDEPSVVADKVKQGSGNFGYNAATGEYGDMIEMGILDPAKVTRSALQAAASIGGLMITTEAMVADLPEDKPAAGMPDMGGMGGMGGMM.

Residues 30–33 (TLGP), Lys-51, 87–91 (DGTTT), Gly-415, 479–481 (NAA), and Asp-495 each bind ATP.

Belongs to the chaperonin (HSP60) family. As to quaternary structure, forms a cylinder of 14 subunits composed of two heptameric rings stacked back-to-back. Interacts with the co-chaperonin GroES.

The protein localises to the cytoplasm. It carries out the reaction ATP + H2O + a folded polypeptide = ADP + phosphate + an unfolded polypeptide.. Its function is as follows. Together with its co-chaperonin GroES, plays an essential role in assisting protein folding. The GroEL-GroES system forms a nano-cage that allows encapsulation of the non-native substrate proteins and provides a physical environment optimized to promote and accelerate protein folding. The protein is Chaperonin GroEL of Pseudomonas putida (strain ATCC 700007 / DSM 6899 / JCM 31910 / BCRC 17059 / LMG 24140 / F1).